Here is a 205-residue protein sequence, read N- to C-terminus: Small ribosomal subunit protein uS4 (205 aa).

Basic residues predominate over residues 1 to 12 (MSKRIQAKHKLD). The interval 1–49 (MSKRIQAKHKLDRRMGQNIWGRPKSPVNRREYGPGQHGQRRKGKMSDFG) is disordered. In terms of domain architecture, S4 RNA-binding spans 94–155 (RRLDAVVYRA…SSRQLEIVIV (62 aa)).

It belongs to the universal ribosomal protein uS4 family. As to quaternary structure, part of the 30S ribosomal subunit. Contacts protein S5. The interaction surface between S4 and S5 is involved in control of translational fidelity.

In terms of biological role, one of the primary rRNA binding proteins, it binds directly to 16S rRNA where it nucleates assembly of the body of the 30S subunit. Its function is as follows. With S5 and S12 plays an important role in translational accuracy. In Methylobacterium radiotolerans (strain ATCC 27329 / DSM 1819 / JCM 2831 / NBRC 15690 / NCIMB 10815 / 0-1), this protein is Small ribosomal subunit protein uS4.